A 497-amino-acid polypeptide reads, in one-letter code: Probable malate:quinone oxidoreductase (497 aa).

The protein belongs to the MQO family. The cofactor is FAD.

The enzyme catalyses (S)-malate + a quinone = a quinol + oxaloacetate. The protein operates within carbohydrate metabolism; tricarboxylic acid cycle; oxaloacetate from (S)-malate (quinone route): step 1/1. In Bacillus cereus (strain ATCC 14579 / DSM 31 / CCUG 7414 / JCM 2152 / NBRC 15305 / NCIMB 9373 / NCTC 2599 / NRRL B-3711), this protein is Probable malate:quinone oxidoreductase.